The chain runs to 176 residues: Inorganic pyrophosphatase (176 aa).

Residues lysine 30, arginine 44, and tyrosine 56 each contribute to the substrate site. Mg(2+) contacts are provided by aspartate 66, aspartate 71, and aspartate 103. Tyrosine 142 contributes to the substrate binding site.

This sequence belongs to the PPase family. In terms of assembly, homohexamer. Requires Mg(2+) as cofactor.

The protein resides in the cytoplasm. It carries out the reaction diphosphate + H2O = 2 phosphate + H(+). In terms of biological role, catalyzes the hydrolysis of inorganic pyrophosphate (PPi) forming two phosphate ions. This chain is Inorganic pyrophosphatase, found in Aeropyrum pernix (strain ATCC 700893 / DSM 11879 / JCM 9820 / NBRC 100138 / K1).